Reading from the N-terminus, the 498-residue chain is Probable cytosol aminopeptidase (498 aa).

2 residues coordinate Mn(2+): K264 and D269. The active site involves K276. Residues D287, D346, and E348 each contribute to the Mn(2+) site. The active site involves R350.

It belongs to the peptidase M17 family. It depends on Mn(2+) as a cofactor.

The protein localises to the cytoplasm. It catalyses the reaction Release of an N-terminal amino acid, Xaa-|-Yaa-, in which Xaa is preferably Leu, but may be other amino acids including Pro although not Arg or Lys, and Yaa may be Pro. Amino acid amides and methyl esters are also readily hydrolyzed, but rates on arylamides are exceedingly low.. The catalysed reaction is Release of an N-terminal amino acid, preferentially leucine, but not glutamic or aspartic acids.. Presumably involved in the processing and regular turnover of intracellular proteins. Catalyzes the removal of unsubstituted N-terminal amino acids from various peptides. The polypeptide is Probable cytosol aminopeptidase (Brucella anthropi (strain ATCC 49188 / DSM 6882 / CCUG 24695 / JCM 21032 / LMG 3331 / NBRC 15819 / NCTC 12168 / Alc 37) (Ochrobactrum anthropi)).